Reading from the N-terminus, the 228-residue chain is Auxin-responsive protein IAA14 (228 aa).

An EAR-like (transcriptional repression) motif is present at residues 8–12; it reads LCLGL. The 101-residue stretch at 110 to 210 folds into the PB1 domain; sequence VAFVKVSMDG…SCKRLRIMKG (101 aa).

The protein belongs to the Aux/IAA family. As to quaternary structure, homodimers and heterodimers. Interacts with TPL. As to expression, preferentially expressed in roots and flowers.

Its subcellular location is the nucleus. Its function is as follows. Aux/IAA proteins are short-lived transcriptional factors that function as repressors of early auxin response genes at low auxin concentrations. Repression is thought to result from the interaction with auxin response factors (ARFs), proteins that bind to the auxin-responsive promoter element (AuxRE). Formation of heterodimers with ARF proteins may alter their ability to modulate early auxin response genes expression. This is Auxin-responsive protein IAA14 (IAA14) from Arabidopsis thaliana (Mouse-ear cress).